Reading from the N-terminus, the 416-residue chain is MLNAQQFLNQFSLEAPLDESLYPIIRDICQEVKVHGDKALKMYNLTFDHTKTDHLEISHEQIKAAFDTLDEKTKQALQQSYERIKAYQESIKQTNQQLEESVECYEIYHPLESVGIYVPGGKASYPSTVLMTATLAQVAGVENIVVVTPPQPNGVSQEVLAACYITQVNQVFQVGGAQSIAALTYGTETIPKVDKIVGPGNQFVAYAKKYLFGQVGIDQIAGPTEIALIIDDTADLDAIVYDVFAQAEHDELARTYVIGEDAQVLKDLESRIAKALPNVDRYDIVSKSIANQHYLIHASNFDEACHVMNTIAPEHASIQTVNPQPYIEKVKYVGALFIGHYSPEVIGDYVAGPSHVLPTNRTARFTNGLSVNDFLTRNTVIHLSKDTFEQIADSAQHIAHVEALYNHQQSILIRQS.

Residues Tyr117, Gln178, and Asn201 each coordinate NAD(+). The substrate site is built by Thr224, Gln246, and His249. Residues Gln246 and His249 each contribute to the Zn(2+) site. Catalysis depends on proton acceptor residues Glu314 and His315. Positions 315, 348, 402, and 407 each coordinate substrate. Asp348 contributes to the Zn(2+) binding site. Residue His407 participates in Zn(2+) binding.

It belongs to the histidinol dehydrogenase family. Zn(2+) serves as cofactor.

It carries out the reaction L-histidinol + 2 NAD(+) + H2O = L-histidine + 2 NADH + 3 H(+). It participates in amino-acid biosynthesis; L-histidine biosynthesis; L-histidine from 5-phospho-alpha-D-ribose 1-diphosphate: step 9/9. Catalyzes the sequential NAD-dependent oxidations of L-histidinol to L-histidinaldehyde and then to L-histidine. In Staphylococcus aureus (strain Mu50 / ATCC 700699), this protein is Histidinol dehydrogenase.